Here is a 253-residue protein sequence, read N- to C-terminus: FAS1 domain-containing protein CAGL0M08734g (253 aa).

The signal sequence occupies residues 1–16; the sequence is MVALKYVLVPVALVAA. An FAS1 domain is found at 84 to 248; it reads DIYLDSQISV…GVILVIDATL (165 aa).

It is found in the vacuole. The protein is FAS1 domain-containing protein CAGL0M08734g of Candida glabrata (strain ATCC 2001 / BCRC 20586 / JCM 3761 / NBRC 0622 / NRRL Y-65 / CBS 138) (Yeast).